The primary structure comprises 662 residues: Glycogen debranching enzyme (662 aa).

The Nucleophile role is filled by aspartate 338. The Proton donor role is filled by glutamate 373.

This sequence belongs to the glycosyl hydrolase 13 family.

The catalysed reaction is Hydrolysis of (1-&gt;6)-alpha-D-glucosidic linkages to branches with degrees of polymerization of three or four glucose residues in limit dextrin.. The protein operates within glycan degradation; glycogen degradation. In terms of biological role, removes maltotriose and maltotetraose chains that are attached by 1,6-alpha-linkage to the limit dextrin main chain, generating a debranched limit dextrin. This chain is Glycogen debranching enzyme, found in Yersinia pestis bv. Antiqua (strain Angola).